The following is a 329-amino-acid chain: MKLLVTGGAGYVGSVAAAVLLEHGHDVTIIDNFSTGNREAVPADARLIEGDVNDVVEEVLSEGGFEGVVHFAARSLVGESVEKPNEYWHDNVVTALTLLDAMRAHGVNNLVFSSTAATYGEPDVVPITEDMPTQPTNAYGATKLSIDYAITSYAAAFGLAATSLRYFNVAGAYGNIGENREVETHLIPLVLQVATGHREKTFMFGDDWPTPDGTAVRDYIHILDLAKAHVLALESNEAGKHRIFNLGSGDGYSVKQVVEMCREVTGHPIPAEVAPRRAGDPATLIASSEKAKQELGWTPEHTDLRTIVEDAWAFTSALGDRSHAAKKKA.

Residues 11-12 (YV), 31-36 (DNFSTG), 51-52 (DV), 71-75 (FAARS), T115, Y139, K143, and F167 each bind NAD(+). Substrate contacts are provided by T115 and Y139. The Proton acceptor role is filled by Y139. Substrate is bound by residues N168, 185-186 (HL), 202-204 (FMF), R217, and 277-280 (RAGD).

The protein belongs to the NAD(P)-dependent epimerase/dehydratase family. Homodimer. NAD(+) serves as cofactor.

The catalysed reaction is UDP-alpha-D-glucose = UDP-alpha-D-galactose. Its pathway is carbohydrate metabolism; galactose metabolism. Its function is as follows. Involved in the metabolism of galactose. Catalyzes the conversion of UDP-galactose (UDP-Gal) to UDP-glucose (UDP-Glc) through a mechanism involving the transient reduction of NAD. The sequence is that of UDP-glucose 4-epimerase (galE) from Corynebacterium glutamicum (strain ATCC 13032 / DSM 20300 / JCM 1318 / BCRC 11384 / CCUG 27702 / LMG 3730 / NBRC 12168 / NCIMB 10025 / NRRL B-2784 / 534).